A 389-amino-acid chain; its full sequence is viridiflorene synthase Agr2 (389 aa).

A signal peptide spans Met1–Ala15. The Mg(2+) site is built by Asp128, Asn263, Ser267, and Glu271. The DDXXD motif motif lies at Asp128–Asp132. Positions 360 and 361 each coordinate (2E,6E)-farnesyl diphosphate.

Belongs to the terpene synthase family. The cofactor is Mg(2+).

The enzyme catalyses (2E,6E)-farnesyl diphosphate = viridiflorene + diphosphate. Its function is as follows. Terpene cyclase that catalyzes the cyclization of farnesyl diphosphate (FPP) to viridiflorene. The chain is viridiflorene synthase Agr2 from Cyclocybe aegerita (Black poplar mushroom).